Consider the following 161-residue polypeptide: S-ribosylhomocysteine lyase (161 aa).

Positions 57, 61, and 127 each coordinate Fe cation.

This sequence belongs to the LuxS family. Homodimer. It depends on Fe cation as a cofactor.

The enzyme catalyses S-(5-deoxy-D-ribos-5-yl)-L-homocysteine = (S)-4,5-dihydroxypentane-2,3-dione + L-homocysteine. Its function is as follows. Involved in the synthesis of autoinducer 2 (AI-2) which is secreted by bacteria and is used to communicate both the cell density and the metabolic potential of the environment. The regulation of gene expression in response to changes in cell density is called quorum sensing. Catalyzes the transformation of S-ribosylhomocysteine (RHC) to homocysteine (HC) and 4,5-dihydroxy-2,3-pentadione (DPD). This chain is S-ribosylhomocysteine lyase, found in Streptococcus equi subsp. equi (strain 4047).